The primary structure comprises 490 residues: Metal cation symporter ZIP14 (490 aa).

The signal sequence occupies residues Met1–Ala28. At Val29 to Gly155 the chain is on the extracellular side. N-linked (GlcNAc...) asparagine glycans are attached at residues Asn75, Asn85, and Asn100. Residues Ala127–Pro146 are disordered. Residues Leu156–Met176 form a helical membrane-spanning segment. Residues Lys177–Leu184 lie on the Cytoplasmic side of the membrane. A helical transmembrane segment spans residues Leu185–Ile205. Residues Pro206–Ser222 lie on the Extracellular side of the membrane. The chain crosses the membrane as a helical span at residues Ala223 to Leu243. The Cytoplasmic portion of the chain corresponds to Lys244–Gln395. The short motif at His249–Tyr256 is the HHHGHXHX-motif element. An XEXPHE-motif motif is present at residues Glu374–Glu379. A helical transmembrane segment spans residues Ala396 to Leu416. The Extracellular portion of the chain corresponds to Ala417 to Ser422. The helical transmembrane segment at Ala423–Phe443 threads the bilayer. The Cytoplasmic segment spans residues Pro444–Ala459. A helical membrane pass occupies residues Leu460–Leu480. The Extracellular portion of the chain corresponds to Thr481 to Gly490.

Belongs to the ZIP transporter (TC 2.A.5) family. In terms of assembly, homotrimer. Ubiquitinated. Ubiquitination occurs upon iron depletion. The ubiquitinated form undergoes proteasomal degradation. Post-translationally, N-glycosylated. N-glycosylation at Asn-100 is required for iron-regulated extraction of the transporter from membranes and subsequent proteasomal degradation.

Its subcellular location is the cell membrane. The protein resides in the apical cell membrane. It localises to the basolateral cell membrane. The protein localises to the early endosome membrane. It is found in the late endosome membrane. Its subcellular location is the lysosome membrane. The catalysed reaction is Zn(2+)(out) + 2 hydrogencarbonate(out) = Zn(2+)(in) + 2 hydrogencarbonate(in). The enzyme catalyses Mn(2+)(out) + 2 hydrogencarbonate(out) = Mn(2+)(in) + 2 hydrogencarbonate(in). It carries out the reaction Fe(2+)(out) + 2 hydrogencarbonate(out) = Fe(2+)(in) + 2 hydrogencarbonate(in). It catalyses the reaction Cd(2+)(out) + 2 hydrogencarbonate(out) = Cd(2+)(in) + 2 hydrogencarbonate(in). Functionally, electroneutral transporter of the plasma membrane mediating the cellular uptake of the divalent metal cations zinc, manganese and iron that are important for tissue homeostasis, metabolism, development and immunity. Functions as an energy-dependent symporter, transporting through the membranes an electroneutral complex composed of a divalent metal cation and two bicarbonate anions. Beside these endogenous cellular substrates, can also import cadmium a non-essential metal which is cytotoxic and carcinogenic. The sequence is that of Metal cation symporter ZIP14 from Bos taurus (Bovine).